We begin with the raw amino-acid sequence, 958 residues long: Nuclear factor NF-kappa-B p100 subunit (958 aa).

Positions 40–230 constitute an RHD domain; that stretch reads LLMSYLSIIE…DPIHDSKSPG (191 aa). A Nuclear localization signal motif is present at residues 343-347; sequence RKRRK. Disordered stretches follow at residues 350-374 and 411-442; these read PTFN…SFGQ and CSAT…QTDS. Residues 352 to 390 are GRR; the sequence is FNNHFYGGGSPMGGAPPGSSFGQGGGSNINYQYTGMNSA. The segment covering 357 to 374 has biased composition (gly residues); sequence YGGGSPMGGAPPGSSFGQ. Positions 412-425 are enriched in polar residues; that stretch reads SATNSSEKNQQPSI. ANK repeat units lie at residues 500-529, 539-568, 572-603, 610-639, 644-674, and 678-707; these read NGDT…SIPN, LQQT…DPTI, YGNS…QKNL, HGLS…NVNS, SGKS…DINA, and GGNT…NVLS. Residues 705–766 form a disordered region; it reads VLSENDEPVN…SAEEMHRREQ (62 aa). Residues 724-734 are compositionally biased toward acidic residues; sequence SESDSDVQMDT. Residues 753 to 766 show a composition bias toward basic and acidic residues; sequence ECEHSAEEMHRREQ. The 87-residue stretch at 815–901 folds into the Death domain; the sequence is VNVLALETNT…EGVELLCKSE (87 aa). The span at 904-916 shows a compositional bias: basic and acidic residues; that stretch reads AKHHSPAESKNDS. A disordered region spans residues 904–958; sequence AKHHSPAESKNDSAYESQSMEVDQSSGNLMDDSQKQTIPVSAAELCPTTEPTIGQ. Residues 917 to 931 are compositionally biased toward polar residues; the sequence is AYESQSMEVDQSSGN.

In terms of assembly, active NF-kappa-B is a heterodimer of an about 52 kDa DNA-binding subunit and the weak DNA-binding subunit p65. Two heterodimers might form a labile tetramer. Post-translationally, while translation occurs, the particular unfolded structure after the GRR repeat promotes the generation of p52 making it an acceptable substrate for the proteasome. This process is known as cotranslational processing. The processed form is active and the unprocessed form acts as an inhibitor (I kappa B-like), being able to form cytosolic complexes with NF-kappa B, trapping it in the cytoplasm. Complete folding of the region downstream of the GRR repeat precludes processing. Constitutive processing is tightly suppressed by its C-terminal processing inhibitory domain, named PID, which contains the death domain. In terms of tissue distribution, expressed in spleen.

Its subcellular location is the nucleus. It localises to the cytoplasm. Functionally, appears to have dual functions such as cytoplasmic retention of attached NF-kappa-B proteins and generation of p52 by a cotranslational processing. The proteasome-mediated process ensures the production of both p52 and p100 and preserves their independent function. p52 binds to the kappa-B consensus sequence 5'-GGRNNYYCC-3', located in the enhancer region of genes involved in immune response and acute phase reactions. In concert with RELB, may play a role in the regulation of the circadian clock. In Xenopus laevis (African clawed frog), this protein is Nuclear factor NF-kappa-B p100 subunit (nfkb2).